Here is a 714-residue protein sequence, read N- to C-terminus: Fatty acid oxidation complex subunit alpha (714 aa).

The interval 1–190 (MEMASAFTLN…KLGLVDDVVP (190 aa)) is enoyl-CoA hydratase. The 3-hydroxyacyl-CoA dehydrogenase stretch occupies residues 306–714 (APLNSVGILG…FWKTTATDLQ (409 aa)).

It in the N-terminal section; belongs to the enoyl-CoA hydratase/isomerase family. The protein in the central section; belongs to the 3-hydroxyacyl-CoA dehydrogenase family. Heterotetramer of two alpha chains (FadJ) and two beta chains (FadI).

Its subcellular location is the cytoplasm. It catalyses the reaction a (3S)-3-hydroxyacyl-CoA = a (2E)-enoyl-CoA + H2O. The enzyme catalyses a 4-saturated-(3S)-3-hydroxyacyl-CoA = a (3E)-enoyl-CoA + H2O. The catalysed reaction is a (3S)-3-hydroxyacyl-CoA + NAD(+) = a 3-oxoacyl-CoA + NADH + H(+). It carries out the reaction (3S)-3-hydroxybutanoyl-CoA = (3R)-3-hydroxybutanoyl-CoA. Its pathway is lipid metabolism; fatty acid beta-oxidation. Functionally, catalyzes the formation of a hydroxyacyl-CoA by addition of water on enoyl-CoA. Also exhibits 3-hydroxyacyl-CoA epimerase and 3-hydroxyacyl-CoA dehydrogenase activities. In Shigella flexneri, this protein is Fatty acid oxidation complex subunit alpha.